The following is a 285-amino-acid chain: Polyamine aminopropyltransferase (285 aa).

Positions 5–241 constitute a PABS domain; it reads DNWYIEHFQP…GWWSVTMASK (237 aa). Gln35 lines the S-methyl-5'-thioadenosine pocket. His66 and Asp90 together coordinate spermidine. Residues Asp110 and 141–142 contribute to the S-methyl-5'-thioadenosine site; that span reads DG. Residue Asp160 is the Proton acceptor of the active site. Spermidine is bound at residue 160-163; the sequence is DSTD. Pro167 is an S-methyl-5'-thioadenosine binding site.

It belongs to the spermidine/spermine synthase family. Homodimer or homotetramer.

It is found in the cytoplasm. It catalyses the reaction S-adenosyl 3-(methylsulfanyl)propylamine + putrescine = S-methyl-5'-thioadenosine + spermidine + H(+). The protein operates within amine and polyamine biosynthesis; spermidine biosynthesis; spermidine from putrescine: step 1/1. Its function is as follows. Catalyzes the irreversible transfer of a propylamine group from the amino donor S-adenosylmethioninamine (decarboxy-AdoMet) to putrescine (1,4-diaminobutane) to yield spermidine. This chain is Polyamine aminopropyltransferase, found in Xanthomonas campestris pv. campestris (strain 8004).